A 59-amino-acid polypeptide reads, in one-letter code: Large ribosomal subunit protein uL30 (59 aa).

The protein belongs to the universal ribosomal protein uL30 family. Part of the 50S ribosomal subunit.

The protein is Large ribosomal subunit protein uL30 of Staphylococcus haemolyticus (strain JCSC1435).